We begin with the raw amino-acid sequence, 136 residues long: NADPH-dependent 7-cyano-7-deazaguanine reductase (136 aa).

The Thioimide intermediate role is filled by cysteine 50. The Proton donor role is filled by aspartate 57. Residues tyrosine 72–leucine 74 and histidine 91–glutamate 92 contribute to the substrate site.

This sequence belongs to the GTP cyclohydrolase I family. QueF type 1 subfamily.

Its subcellular location is the cytoplasm. The enzyme catalyses 7-aminomethyl-7-carbaguanine + 2 NADP(+) = 7-cyano-7-deazaguanine + 2 NADPH + 3 H(+). It participates in tRNA modification; tRNA-queuosine biosynthesis. Its function is as follows. Catalyzes the NADPH-dependent reduction of 7-cyano-7-deazaguanine (preQ0) to 7-aminomethyl-7-deazaguanine (preQ1). This chain is NADPH-dependent 7-cyano-7-deazaguanine reductase, found in Prochlorococcus marinus (strain AS9601).